The chain runs to 343 residues: S-adenosylmethionine:tRNA ribosyltransferase-isomerase (343 aa).

It belongs to the QueA family. Monomer.

It localises to the cytoplasm. The enzyme catalyses 7-aminomethyl-7-carbaguanosine(34) in tRNA + S-adenosyl-L-methionine = epoxyqueuosine(34) in tRNA + adenine + L-methionine + 2 H(+). The protein operates within tRNA modification; tRNA-queuosine biosynthesis. Its function is as follows. Transfers and isomerizes the ribose moiety from AdoMet to the 7-aminomethyl group of 7-deazaguanine (preQ1-tRNA) to give epoxyqueuosine (oQ-tRNA). In Dehalococcoides mccartyi (strain CBDB1), this protein is S-adenosylmethionine:tRNA ribosyltransferase-isomerase.